We begin with the raw amino-acid sequence, 239 residues long: MPQVLMGNTRLHAPLEDGIPLIENDENSSQNEVDLYDYVSMSSYGGDNDFLISSAGGNITPENRPSFSAHVVLFAISALVIKPVCCFIFLNHYVITGSYDFAVAGGVCTVLYYMRLALTAWFMFRNIQSDMLPLNVWQQFVIGCMALGRTVAFMVVSYTTLFIRSELFFSMLAPNAGREYITPIIAHKLMPLISVRSAVCLVIISTAVYAADAICDTIGFTLPRMWMCILMRSSSVKRS.

The next 3 membrane-spanning stretches (helical) occupy residues 65–81, 140–156, and 189–208; these read PSFSAHVVLFAISALVI, FVIGCMALGRTVAFMVV, and LMPLISVRSAVCLVIISTAV.

It belongs to the alphaherpesvirinae UL20 family. As to quaternary structure, interacts with gK (via N-terminus); this interaction plays a role in the coordinate transport of UL20 and gK to the trans-Golgi network (TGN), and is required for their cell surface expression. Interacts with gB.

It is found in the virion. It localises to the host cell membrane. The protein localises to the host endosome membrane. The protein resides in the host Golgi apparatus membrane. Its subcellular location is the host nucleus membrane. Its function is as follows. Plays an essential role in egress of virus particles from the nucleus, cytoplasmic envelopment and virus-induced cell fusion. Forms a functional protein complex with gK and this interaction is absolutely essential for their coordinate intracellular transport, gK glycosylation, expression on host cell surface, and function. Together, they modulate gB-mediated virus-induced cell fusion and virion egress and therefore actively participate in these processes. In Equus caballus (Horse), this protein is Protein UL20 homolog.